The chain runs to 497 residues: Tryptophan decarboxylase 2 (497 aa).

Residues Ala-162, Ser-163, Thr-257, and Asn-311 each coordinate pyridoxal 5'-phosphate. The residue at position 314 (Lys-314) is an N6-(pyridoxal phosphate)lysine.

Belongs to the group II decarboxylase family. The cofactor is pyridoxal 5'-phosphate.

It carries out the reaction L-tryptophan + H(+) = tryptamine + CO2. In terms of biological role, involved in serotonin biosynthesis. Catalyzes the decarboxylation of L-tryptophan to tryptamine, which is converted to serotonin by tryptamine 5-hydroxylase. May play a minor role in serotonin biosynthetis during senescence. Accumulation of serotonin attenuates leaf senescence. This Oryza sativa subsp. japonica (Rice) protein is Tryptophan decarboxylase 2.